Consider the following 57-residue polypeptide: DNA-directed RNA polymerase subunit Rpo6 (57 aa).

It belongs to the archaeal Rpo6/eukaryotic RPB6 RNA polymerase subunit family. As to quaternary structure, part of the RNA polymerase complex.

It localises to the cytoplasm. It carries out the reaction RNA(n) + a ribonucleoside 5'-triphosphate = RNA(n+1) + diphosphate. Its function is as follows. DNA-dependent RNA polymerase (RNAP) catalyzes the transcription of DNA into RNA using the four ribonucleoside triphosphates as substrates. The protein is DNA-directed RNA polymerase subunit Rpo6 of Thermococcus onnurineus (strain NA1).